We begin with the raw amino-acid sequence, 263 residues long: Pyridoxine 5'-phosphate synthase (263 aa).

Residue asparagine 15 coordinates 3-amino-2-oxopropyl phosphate. 17 to 18 (DH) is a 1-deoxy-D-xylulose 5-phosphate binding site. Residue arginine 26 coordinates 3-amino-2-oxopropyl phosphate. Histidine 51 (proton acceptor) is an active-site residue. Positions 53 and 58 each coordinate 1-deoxy-D-xylulose 5-phosphate. Residue glutamate 78 is the Proton acceptor of the active site. Threonine 108 serves as a coordination point for 1-deoxy-D-xylulose 5-phosphate. Histidine 199 functions as the Proton donor in the catalytic mechanism. 3-amino-2-oxopropyl phosphate-binding positions include glycine 200 and 221–222 (GH).

The protein belongs to the PNP synthase family. As to quaternary structure, homooctamer; tetramer of dimers.

The protein localises to the cytoplasm. It catalyses the reaction 3-amino-2-oxopropyl phosphate + 1-deoxy-D-xylulose 5-phosphate = pyridoxine 5'-phosphate + phosphate + 2 H2O + H(+). Its pathway is cofactor biosynthesis; pyridoxine 5'-phosphate biosynthesis; pyridoxine 5'-phosphate from D-erythrose 4-phosphate: step 5/5. Functionally, catalyzes the complicated ring closure reaction between the two acyclic compounds 1-deoxy-D-xylulose-5-phosphate (DXP) and 3-amino-2-oxopropyl phosphate (1-amino-acetone-3-phosphate or AAP) to form pyridoxine 5'-phosphate (PNP) and inorganic phosphate. This is Pyridoxine 5'-phosphate synthase from Ralstonia nicotianae (strain ATCC BAA-1114 / GMI1000) (Ralstonia solanacearum).